A 106-amino-acid polypeptide reads, in one-letter code: HIG1 domain family member 2A (106 aa).

A2 is modified (N-acetylalanine). The HIG1 domain maps to 20–106 (VIEGFSPTVY…LAASAMKSQA (87 aa)). The next 2 membrane-spanning stretches (helical) occupy residues 47-67 (PMVP…LYCF) and 83-103 (IAAQ…SAMK).

In terms of assembly, associates with cytochrome c oxidase (COX, complex IV); proposed complex component.

It localises to the mitochondrion membrane. It is found in the mitochondrion inner membrane. In terms of biological role, proposed subunit of cytochrome c oxidase (COX, complex IV), which is the terminal component of the mitochondrial respiratory chain that catalyzes the reduction of oxygen to water. May be involved in cytochrome c oxidase activity. May play a role in the assembly of respiratory supercomplexes. The protein is HIG1 domain family member 2A (Higd2a) of Mus musculus (Mouse).